We begin with the raw amino-acid sequence, 314 residues long: Lysophospholipase D GDPD1 (314 aa).

Residues Met1–Ser3 lie on the Extracellular side of the membrane. The chain crosses the membrane as a helical span at residues Thr4–Leu24. Topologically, residues Lys25–Asp195 are cytoplasmic. In terms of domain architecture, GP-PDE spans Ser40 to Leu309. Glu72, Asp74, and His87 together coordinate a divalent metal cation. Residues Ile196–Leu216 form a helical membrane-spanning segment. Residues Leu217 to Ala314 are Extracellular-facing.

This sequence belongs to the glycerophosphoryl diester phosphodiesterase family. Widely expressed.

It localises to the cytoplasm. The protein resides in the membrane. Its subcellular location is the perinuclear region. It is found in the endoplasmic reticulum. The enzyme catalyses 1-hexadecanoyl-sn-glycero-3-phosphocholine + H2O = 1-hexadecanoyl-sn-glycero-3-phosphate + choline + H(+). The catalysed reaction is 1-hexadecanoyl-sn-glycero-3-phosphoethanolamine + H2O = 1-hexadecanoyl-sn-glycero-3-phosphate + ethanolamine + H(+). It carries out the reaction N-hexadecanoyl-sn-glycero-3-phosphoethanolamine + H2O = N-hexadecanoylethanolamine + sn-glycerol 3-phosphate + H(+). It catalyses the reaction N-(5Z,8Z,11Z,14Z-eicosatetraenoyl)-1-(9Z-octadecenoyl)-sn-glycero-3-phosphoethanolamine + H2O = N-(5Z,8Z,11Z,14Z-eicosatetraenoyl)-ethanolamine + 1-(9Z-octadecenoyl)-sn-glycero-3-phosphate + H(+). The enzyme catalyses N,1-di-(9Z-octadecenoyl)-sn-glycero-3-phosphoethanolamine + H2O = N-(9Z-octadecenoyl) ethanolamine + 1-(9Z-octadecenoyl)-sn-glycero-3-phosphate + H(+). The catalysed reaction is N-hexadecanoyl-1-(9Z-octadecenoyl)-sn-glycero-3-phosphoethanolamine + H2O = N-hexadecanoylethanolamine + 1-(9Z-octadecenoyl)-sn-glycero-3-phosphate + H(+). It carries out the reaction a 1-O-alkyl-sn-glycero-3-phosphocholine + H2O = a 1-O-alkyl-sn-glycero-3-phosphate + choline + H(+). It catalyses the reaction 1-O-hexadecyl-sn-glycero-3-phosphocholine + H2O = 1-O-hexadecyl-sn-glycero-3-phosphate + choline + H(+). The enzyme catalyses 1-(9Z-octadecenoyl)-sn-glycero-3-phosphocholine + H2O = 1-(9Z-octadecenoyl)-sn-glycero-3-phosphate + choline + H(+). The catalysed reaction is N,1-dihexadecanoyl-sn-glycero-3-phosphoethanolamine + H2O = N-hexadecanoylethanolamine + 1-hexadecanoyl-sn-glycero-3-phosphate + H(+). It carries out the reaction 1-O-(1Z-octadecenyl)-sn-glycero-3-phospho-(N-5Z,8Z,11Z,14Z-eicosatetraenoyl)-ethanolamine + H2O = 1-O-(1Z-octadecenyl)-sn-glycero-3-phosphate + N-(5Z,8Z,11Z,14Z-eicosatetraenoyl)-ethanolamine + H(+). It catalyses the reaction 1-O-(1Z-octadecenyl)-sn-glycero-3-phospho-(N-9Z-octadecenoyl)-ethanolamine + H2O = 1-O-(1Z-octadecenyl)-sn-glycero-3-phosphate + N-(9Z-octadecenoyl) ethanolamine + H(+). The enzyme catalyses 1-O-(1Z-octadecenyl)-sn-glycero-3-phospho-N-hexadecanoyl-ethanolamine + H2O = 1-O-(1Z-octadecenyl)-sn-glycero-3-phosphate + N-hexadecanoylethanolamine + H(+). Its activity is regulated as follows. Lysophospholipase D activity is increased by magnesium and manganese and inhibited by calcium in a concentration dependent manner. Loss of lysophospholipase D activity by addition of EDTA. In terms of biological role, hydrolyzes lysoglycerophospholipids to produce lysophosphatidic acid (LPA) and the corresponding amines. Shows a preference for 1-O-alkyl-sn-glycero-3-phosphocholine (lyso-PAF), lysophosphatidylethanolamine (lyso-PE) and lysophosphatidylcholine (lyso-PC). May be involved in bioactive N-acylethanolamine biosynthesis from both N-acyl-lysoplasmenylethanolamin (N-acyl-lysoPlsEt) and N-acyl-lysophosphatidylethanolamin (N-acyl-lysoPE). In addition, hydrolyzes glycerophospho-N-acylethanolamine to N-acylethanolamine. Does not display glycerophosphodiester phosphodiesterase activity, since it cannot hydrolyze either glycerophosphoinositol or glycerophosphocholine. The polypeptide is Lysophospholipase D GDPD1 (Mus musculus (Mouse)).